The primary structure comprises 430 residues: tRNA(Ile)-lysidine synthase (430 aa).

21–26 (SGGLDS) lines the ATP pocket.

It belongs to the tRNA(Ile)-lysidine synthase family.

It is found in the cytoplasm. It carries out the reaction cytidine(34) in tRNA(Ile2) + L-lysine + ATP = lysidine(34) in tRNA(Ile2) + AMP + diphosphate + H(+). Ligates lysine onto the cytidine present at position 34 of the AUA codon-specific tRNA(Ile) that contains the anticodon CAU, in an ATP-dependent manner. Cytidine is converted to lysidine, thus changing the amino acid specificity of the tRNA from methionine to isoleucine. The sequence is that of tRNA(Ile)-lysidine synthase from Salmonella schwarzengrund (strain CVM19633).